We begin with the raw amino-acid sequence, 310 residues long: MPRTDNDSWDLATSVGATATMVAAARAIATNADNPLIADRFAEPLVRAVGVDFFTRWVTGDLVVADVDDTESGWQLAQMPDAMAVRTRFFDAFFQDATRAGVRQAVILASGLDARAYRLDWPAGMTVFEIDQPEVIAFKTTTLAGLGAVPRADLRTVAVDLRQDWPKALTDAGFDAGSPTAWIAEGLFGYLPPEAQDRLLDNITALSAAGSRLACEAIPNRPQQDAEKARELMRKATARWREHGFELEFGDLGYEGDRADVALYLQDLGWQSVGTQMGQLLADNGAAPIPHNDDSVTMADTIYYSSVLTA.

S-adenosyl-L-methionine contacts are provided by residues D131 and 160–161 (DL).

This sequence belongs to the UPF0677 family.

Functionally, exhibits S-adenosyl-L-methionine-dependent methyltransferase activity. This is Putative S-adenosyl-L-methionine-dependent methyltransferase MMAR_3534 from Mycobacterium marinum (strain ATCC BAA-535 / M).